Consider the following 587-residue polypeptide: Pyruvate decarboxylase 3 (587 aa).

Residues D48 and H135 each coordinate substrate. The thiamine pyrophosphate binding stretch occupies residues 415–496; it reads DSWFNCQKLR…FLINNGGYTI (82 aa). D464, N491, and G493 together coordinate Mg(2+). A substrate-binding site is contributed by E497.

This sequence belongs to the TPP enzyme family. In terms of assembly, homotetramer. A metal cation is required as a cofactor. It depends on thiamine diphosphate as a cofactor.

The catalysed reaction is a 2-oxocarboxylate + H(+) = an aldehyde + CO2. The protein is Pyruvate decarboxylase 3 (PDC3) of Oryza sativa subsp. japonica (Rice).